Consider the following 112-residue polypeptide: MKKIEAIIKPFKLDEVKEALQEVGLQGITVTEAKGFGRQKGHTELYRGAEYVVDFLPKVKVEVVLADENAEAVIEAIRNAAQTGRIGDGKIFVSNVEEVIRIRTGETGLDAI.

Tyr-51 bears the O-UMP-tyrosine mark.

It belongs to the P(II) protein family. Homotrimer.

Its function is as follows. In nitrogen-limiting conditions, when the ratio of Gln to 2-ketoglutarate decreases, P-II is uridylylated to P-II-UMP. P-II-UMP allows the deadenylation of glutamine synthetase (GS), thus activating the enzyme. Conversely, in nitrogen excess P-II is deuridylated and promotes the adenylation of GS. P-II indirectly controls the transcription of the GS gene (glnA). P-II prevents NR-II-catalyzed conversion of NR-I to NR-I-phosphate, the transcriptional activator of glnA. When P-II is uridylylated to P-II-UMP, these events are reversed. The chain is Nitrogen regulatory protein P-II (glnB) from Rhizobium meliloti (strain 1021) (Ensifer meliloti).